Reading from the N-terminus, the 720-residue chain is Engulfment and cell motility protein 3 (720 aa).

Residues 307-479 form the ELMO domain; sequence EQREQLQALR…VVREQLARTL (173 aa). Residues 541–663 form the PH domain; it reads LRLCEGMLFR…WTDGLSALLG (123 aa).

As to quaternary structure, probably interacts directly with the SH3-domain of DOCK1 via its SH3-binding site. Part of a complex with DOCK1 and RAC1. Interacts with ADGRB3.

The protein resides in the cytoplasm. Involved in cytoskeletal rearrangements required for phagocytosis of apoptotic cells and cell motility. Acts in association with DOCK1 and CRK. Was initially proposed to be required in complex with DOCK1 to activate Rac Rho small GTPases. May enhance the guanine nucleotide exchange factor (GEF) activity of DOCK1. The protein is Engulfment and cell motility protein 3 (Elmo3) of Rattus norvegicus (Rat).